The sequence spans 82 residues: UPF0512 protein P (82 aa).

It belongs to the UPF0512 family.

The chain is UPF0512 protein P from Dictyostelium discoideum (Social amoeba).